A 407-amino-acid polypeptide reads, in one-letter code: Phosphoglycerate kinase (407 aa).

Residues 24 to 26, arginine 39, 60 to 63, arginine 117, and arginine 157 each bind substrate; these read DIN and HQSR. Residues glutamate 330 and 355–358 each bind ATP; that span reads GGHI.

This sequence belongs to the phosphoglycerate kinase family.

Its subcellular location is the cytoplasm. It carries out the reaction (2R)-3-phosphoglycerate + ATP = (2R)-3-phospho-glyceroyl phosphate + ADP. It functions in the pathway carbohydrate degradation; glycolysis; pyruvate from D-glyceraldehyde 3-phosphate: step 2/5. This chain is Phosphoglycerate kinase (pgk), found in Archaeoglobus fulgidus (strain ATCC 49558 / DSM 4304 / JCM 9628 / NBRC 100126 / VC-16).